The chain runs to 141 residues: uncharacterized protein (141 aa).

The protein resides in the mitochondrion. This is an uncharacterized protein from Arabidopsis thaliana (Mouse-ear cress).